Reading from the N-terminus, the 306-residue chain is UDP-3-O-acyl-N-acetylglucosamine deacetylase (306 aa).

Zn(2+)-binding residues include His79, His238, and Asp242. His265 acts as the Proton donor in catalysis.

This sequence belongs to the LpxC family. It depends on Zn(2+) as a cofactor.

The enzyme catalyses a UDP-3-O-[(3R)-3-hydroxyacyl]-N-acetyl-alpha-D-glucosamine + H2O = a UDP-3-O-[(3R)-3-hydroxyacyl]-alpha-D-glucosamine + acetate. It participates in glycolipid biosynthesis; lipid IV(A) biosynthesis; lipid IV(A) from (3R)-3-hydroxytetradecanoyl-[acyl-carrier-protein] and UDP-N-acetyl-alpha-D-glucosamine: step 2/6. Functionally, catalyzes the hydrolysis of UDP-3-O-myristoyl-N-acetylglucosamine to form UDP-3-O-myristoylglucosamine and acetate, the committed step in lipid A biosynthesis. The polypeptide is UDP-3-O-acyl-N-acetylglucosamine deacetylase (Shewanella baltica (strain OS223)).